The sequence spans 447 residues: Chromosomal replication initiator protein DnaA (447 aa).

The interval 1-79 (MVSCENLWQQ…TGQEITVKLI (79 aa)) is domain I, interacts with DnaA modulators. Positions 79–105 (ITDGLEPHSLIGQESSLPMETTPKNAT) are domain II. Residues 106-322 (ALNGKYTFSR…GALIRAIAYT (217 aa)) are domain III, AAA+ region. The ATP site is built by Gly150, Gly152, Lys153, and Thr154. The tract at residues 323 to 447 (SLSNVAMTVE…INIAGQAPES (125 aa)) is domain IV, binds dsDNA.

It belongs to the DnaA family. Oligomerizes as a right-handed, spiral filament on DNA at oriC.

The protein resides in the cytoplasm. Its function is as follows. Plays an essential role in the initiation and regulation of chromosomal replication. ATP-DnaA binds to the origin of replication (oriC) to initiate formation of the DNA replication initiation complex once per cell cycle. Binds the DnaA box (a 9 base pair repeat at the origin) and separates the double-stranded (ds)DNA. Forms a right-handed helical filament on oriC DNA; dsDNA binds to the exterior of the filament while single-stranded (ss)DNA is stabiized in the filament's interior. The ATP-DnaA-oriC complex binds and stabilizes one strand of the AT-rich DNA unwinding element (DUE), permitting loading of DNA polymerase. After initiation quickly degrades to an ADP-DnaA complex that is not apt for DNA replication. Binds acidic phospholipids. Functionally, isolated domain IV (residues 348-447) binds both E.coli and B.subtilis oriC. The sequence is that of Chromosomal replication initiator protein DnaA from Synechocystis sp. (strain ATCC 27184 / PCC 6803 / Kazusa).